A 585-amino-acid polypeptide reads, in one-letter code: MAAVELEWIPETLYNTAISAVVDNYIRSRRDIRSLPENIQFDVYYKLYQQGRLCQLGSEFCELEVFAKVLRALDKRHLLHHCFQALMDHGVKVASVLAYSFSRRCSYIAESDAAVKEKAIQVGFVLGGFLSDAGWYSDAEKVFLSCLQLCTLHDEMLHWFRAVECCVRLLHVRNGNCKYHLGEETFKLAQTYMDKLSKHGQQANRAALYGELCALLFAKSHYDEAYKWCVEAMKEITSGLPVKVVVDVLRQASKACVVKREFKKAEQLIKHAVYLARDHFGSKHPKYSDTLLDYGFYLLNVDNICQSVAIYQAALDIRQSVFGGKNIHVATAHEDLAYSSYVHQYSSGKFDNALFHAERAIGIITHILPEDHLLLASSKRVKALILEEIAIDCHNKETEQRLLQEAHDLHLSSLQLAKKAFGEFNVQTAKHYGNLGRLYQSMRKFKEAEEMHIKAIQIKEQLLGQEDYEVALSVGHLASLYNYDMNQYENAEKLYLRSIAIGKKLFGEGYSGLEYDYRGLIKLYNSTGNYEKVFEYHNVLSNWNRLRDRQYSVTDALEDVNSSPQSTEEVVQSFLMSQNVEGPSC.

8 TPR repeats span residues 50-83 (QGRLCQLGSEFCELEVFAKVLRALDKRHLLHHCF), 120-153 (IQVGFVLGGFLSDAGWYSDAEKVFLSCLQLCTLH), 206-239 (AALYGELCALLFAKSHYDEAYKWCVEAMKEITSG), 288-321 (SDTLLDYGFYLLNVDNICQSVAIYQAALDIRQSV), 333-367 (HEDLAYSSYVHQYSSGKFDNALFHAERAIGIITHI), 429-462 (AKHYGNLGRLYQSMRKFKEAEEMHIKAIQIKEQL), 471-505 (ALSVGHLASLYNYDMNQYENAEKLYLRSIAIGKKL), and 514-547 (EYDYRGLIKLYNSTGNYEKVFEYHNVLSNWNRLR).

As to quaternary structure, component of a CRL2 E3 ubiquitin-protein ligase complex, also named ECS (Elongin BC-CUL2/5-SOCS-box protein) complex, composed of CUL2, Elongin BC (ELOB and ELOC), RBX1 and substrate-specific adapter APPBP2. Interacts with APP; APP interaction inhibits the E3 ubiquitin-protein ligase activity of the CRL2(APPBP2) complex. Rapidly degraded by the proteasome upon overexpression of a C-terminal fragment of APP.

It localises to the nucleus. The protein localises to the cytoplasm. Its subcellular location is the cytoskeleton. It is found in the membrane. It participates in protein modification; protein ubiquitination. With respect to regulation, E3 ubiquitin-protein ligase activity of the CRL2(APPBP2) complex is inhibited by APP. In terms of biological role, substrate-recognition component of a Cul2-RING (CRL2) E3 ubiquitin-protein ligase complex of the DesCEND (destruction via C-end degrons) pathway, which recognizes a C-degron located at the extreme C terminus of target proteins, leading to their ubiquitination and degradation. The C-degron recognized by the DesCEND pathway is usually a motif of less than ten residues and can be present in full-length proteins, truncated proteins or proteolytically cleaved forms. The CRL2(APPBP2) complex specifically recognizes proteins with a -Arg-Xaa-Xaa-Gly degron at the C-terminus, leading to their ubiquitination and degradation. The CRL2(APPBP2) complex mediates ubiquitination and degradation of truncated SELENOV selenoproteins produced by failed UGA/Sec decoding, which end with a -Arg-Xaa-Xaa-Gly degron. May play a role in intracellular protein transport: may be involved in the translocation of APP along microtubules toward the cell surface. The polypeptide is Amyloid protein-binding protein 2 (Rattus norvegicus (Rat)).